The sequence spans 230 residues: 2,3-bisphosphoglycerate-dependent phosphoglycerate mutase (230 aa).

Residues 10-17 (RHGESKWN), 23-24 (TG), Arg62, 89-92 (ERNY), Lys100, 116-117 (RR), and 185-186 (GN) each bind substrate. The active-site Tele-phosphohistidine intermediate is the His11. The Proton donor/acceptor role is filled by Glu89.

Belongs to the phosphoglycerate mutase family. BPG-dependent PGAM subfamily. As to quaternary structure, homodimer.

The catalysed reaction is (2R)-2-phosphoglycerate = (2R)-3-phosphoglycerate. Its pathway is carbohydrate degradation; glycolysis; pyruvate from D-glyceraldehyde 3-phosphate: step 3/5. In terms of biological role, catalyzes the interconversion of 2-phosphoglycerate and 3-phosphoglycerate. The polypeptide is 2,3-bisphosphoglycerate-dependent phosphoglycerate mutase (Buchnera aphidicola subsp. Cinara cedri (strain Cc)).